The primary structure comprises 284 residues: Nucleotide-binding protein PputGB1_0956 (284 aa).

8-15 is a binding site for ATP; it reads GRSGSGKS. GTP is bound at residue 60–63; sequence DARN.

This sequence belongs to the RapZ-like family.

Displays ATPase and GTPase activities. The chain is Nucleotide-binding protein PputGB1_0956 from Pseudomonas putida (strain GB-1).